The primary structure comprises 159 residues: Ribosomal RNA large subunit methyltransferase H (159 aa).

S-adenosyl-L-methionine contacts are provided by residues Ile75, Gly108, and 127–132 (FGRMTL).

The protein belongs to the RNA methyltransferase RlmH family. Homodimer.

It is found in the cytoplasm. It carries out the reaction pseudouridine(1915) in 23S rRNA + S-adenosyl-L-methionine = N(3)-methylpseudouridine(1915) in 23S rRNA + S-adenosyl-L-homocysteine + H(+). Its function is as follows. Specifically methylates the pseudouridine at position 1915 (m3Psi1915) in 23S rRNA. The chain is Ribosomal RNA large subunit methyltransferase H from Lactococcus lactis subsp. lactis (strain IL1403) (Streptococcus lactis).